The following is a 289-amino-acid chain: ATP synthase gamma chain (289 aa).

It belongs to the ATPase gamma chain family. In terms of assembly, F-type ATPases have 2 components, CF(1) - the catalytic core - and CF(0) - the membrane proton channel. CF(1) has five subunits: alpha(3), beta(3), gamma(1), delta(1), epsilon(1). CF(0) has three main subunits: a, b and c.

The protein localises to the cell inner membrane. In terms of biological role, produces ATP from ADP in the presence of a proton gradient across the membrane. The gamma chain is believed to be important in regulating ATPase activity and the flow of protons through the CF(0) complex. This Haemophilus influenzae (strain PittEE) protein is ATP synthase gamma chain.